The sequence spans 171 residues: MNKANSFNKEELIACGHGKLFGPNSPRLPVDNMLMIDRIVTINDNGGEFGKGEIVAELDINPELWFFDCHFISDPVMPGCLGLDAMWQLVGFYLGWEGAEGKGRALGVGEVKFTGQVLPGAKKVTYKLNIKRTIHRKLVMGIADAILEVDGRQIYSATDLKVGVFSDTSTF.

His70 is a catalytic residue.

Belongs to the thioester dehydratase family. FabA subfamily. As to quaternary structure, homodimer.

It is found in the cytoplasm. The catalysed reaction is a (3R)-hydroxyacyl-[ACP] = a (2E)-enoyl-[ACP] + H2O. It carries out the reaction (3R)-hydroxydecanoyl-[ACP] = (2E)-decenoyl-[ACP] + H2O. The enzyme catalyses (2E)-decenoyl-[ACP] = (3Z)-decenoyl-[ACP]. Its pathway is lipid metabolism; fatty acid biosynthesis. Functionally, necessary for the introduction of cis unsaturation into fatty acids. Catalyzes the dehydration of (3R)-3-hydroxydecanoyl-ACP to E-(2)-decenoyl-ACP and then its isomerization to Z-(3)-decenoyl-ACP. Can catalyze the dehydratase reaction for beta-hydroxyacyl-ACPs with saturated chain lengths up to 16:0, being most active on intermediate chain length. The protein is 3-hydroxydecanoyl-[acyl-carrier-protein] dehydratase of Shewanella putrefaciens (strain CN-32 / ATCC BAA-453).